We begin with the raw amino-acid sequence, 361 residues long: Phospho-N-acetylmuramoyl-pentapeptide-transferase (361 aa).

Helical transmembrane passes span 25–45 (RTVL…PAMI), 73–93 (TMGG…WADL), 97–117 (YVWI…VDDY), 134–154 (LFWQ…TAEL), 168–188 (VAVP…IVGT), 200–220 (GLAI…SYVA), 237–257 (AGEL…FLWF), 264–284 (VFMG…VTVI), 289–309 (IVML…MLQV), and 338–358 (QVVV…LSSL).

The protein belongs to the glycosyltransferase 4 family. MraY subfamily. Mg(2+) serves as cofactor.

It is found in the cell inner membrane. It catalyses the reaction UDP-N-acetyl-alpha-D-muramoyl-L-alanyl-gamma-D-glutamyl-meso-2,6-diaminopimeloyl-D-alanyl-D-alanine + di-trans,octa-cis-undecaprenyl phosphate = di-trans,octa-cis-undecaprenyl diphospho-N-acetyl-alpha-D-muramoyl-L-alanyl-D-glutamyl-meso-2,6-diaminopimeloyl-D-alanyl-D-alanine + UMP. It participates in cell wall biogenesis; peptidoglycan biosynthesis. Catalyzes the initial step of the lipid cycle reactions in the biosynthesis of the cell wall peptidoglycan: transfers peptidoglycan precursor phospho-MurNAc-pentapeptide from UDP-MurNAc-pentapeptide onto the lipid carrier undecaprenyl phosphate, yielding undecaprenyl-pyrophosphoryl-MurNAc-pentapeptide, known as lipid I. This chain is Phospho-N-acetylmuramoyl-pentapeptide-transferase, found in Nitrosospira multiformis (strain ATCC 25196 / NCIMB 11849 / C 71).